The following is an 89-amino-acid chain: Small ribosomal subunit protein uS15 (89 aa).

Basic and acidic residues predominate over residues 1–21 (MAISQERKNEIIKEYARHEGD). The segment at 1 to 24 (MAISQERKNEIIKEYARHEGDTGS) is disordered.

The protein belongs to the universal ribosomal protein uS15 family. Part of the 30S ribosomal subunit. Forms a bridge to the 50S subunit in the 70S ribosome, contacting the 23S rRNA.

In terms of biological role, one of the primary rRNA binding proteins, it binds directly to 16S rRNA where it helps nucleate assembly of the platform of the 30S subunit by binding and bridging several RNA helices of the 16S rRNA. Functionally, forms an intersubunit bridge (bridge B4) with the 23S rRNA of the 50S subunit in the ribosome. The sequence is that of Small ribosomal subunit protein uS15 from Enterococcus faecalis (strain ATCC 700802 / V583).